The following is a 55-amino-acid chain: Spermatid nuclear transition protein 1 (55 aa).

Over residues 1 to 42 the composition is skewed to basic residues; that stretch reads MSTSRKLKTHGMRRGKNRAPHKGVKRGGSKRKYRKSVLKSRK. The segment at 1–55 is disordered; it reads MSTSRKLKTHGMRRGKNRAPHKGVKRGGSKRKYRKSVLKSRKRGDDASRNYRSHL. Phosphoserine is present on residues S36 and S40.

Belongs to the nuclear transition protein 1 family. In terms of tissue distribution, testis-specific.

Its subcellular location is the nucleus. It localises to the chromosome. In terms of biological role, plays a key role in the replacement of histones to protamine in the elongating spermatids of mammals. In condensing spermatids, loaded onto the nucleosomes, where it promotes the recruitment and processing of protamines, which are responsible for histone eviction. The histone H2AB1-H2BC1/TH2B dimer is required for loading of TNP1 onto chromatin. The protein is Spermatid nuclear transition protein 1 of Mus musculus (Mouse).